The following is a 173-amino-acid chain: Protein-export protein SecB (173 aa).

It belongs to the SecB family. As to quaternary structure, homotetramer, a dimer of dimers. One homotetramer interacts with 1 SecA dimer.

Its subcellular location is the cytoplasm. One of the proteins required for the normal export of preproteins out of the cell cytoplasm. It is a molecular chaperone that binds to a subset of precursor proteins, maintaining them in a translocation-competent state. It also specifically binds to its receptor SecA. This Novosphingobium aromaticivorans (strain ATCC 700278 / DSM 12444 / CCUG 56034 / CIP 105152 / NBRC 16084 / F199) protein is Protein-export protein SecB.